The sequence spans 87 residues: Cell division protein FtsL (87 aa).

Residues 1–6 lie on the Cytoplasmic side of the membrane; it reads MNKSNF. Residues 7–23 traverse the membrane as a helical segment; it reads FLLLAVCVSAFSVVMQQ. Residues 24–87 lie on the Periplasmic side of the membrane; sequence NQYRLNFTAL…GNTFMVEHQR (64 aa). The stretch at 31-71 forms a coiled coil; the sequence is TALDKAKKQEIALEQDYAQMRLQQARLANHEAIRAAAEKQN. A disordered region spans residues 68-87; sequence EKQNLHPPVSGNTFMVEHQR.

The protein belongs to the FtsL family. As to quaternary structure, part of a complex composed of FtsB, FtsL and FtsQ.

It is found in the cell inner membrane. Essential cell division protein. May link together the upstream cell division proteins, which are predominantly cytoplasmic, with the downstream cell division proteins, which are predominantly periplasmic. This chain is Cell division protein FtsL, found in Neisseria gonorrhoeae (strain ATCC 700825 / FA 1090).